A 1201-amino-acid chain; its full sequence is Autophagy-related protein 11 (1201 aa).

The segment at 90-109 (FPFLGRPSTPTKGSDNSTGT) is disordered. Positions 97–109 (STPTKGSDNSTGT) are enriched in polar residues. Positions 418–452 (LLRSDDMVRSLRDEKSKLEEKVKGSESRIRKLEDL) form a coiled coil. Disordered stretches follow at residues 458-503 (HMGR…SEEK) and 525-545 (KLQK…QEVQ). Residues 485 to 499 (RRSSVSSRRMSSNQS) are compositionally biased toward low complexity. The span at 525 to 542 (KLQKDAHAERQSNTDKIQ) shows a compositional bias: basic and acidic residues. Coiled-coil stretches lie at residues 566–670 (RRFL…ALQA) and 710–828 (SAKA…WKER). Disordered stretches follow at residues 1052-1076 (SMNG…DDEN) and 1115-1201 (DARG…LQGP). The span at 1133 to 1166 (RTLSKSLDSRRNSSNSKKGPATPSQRGNDSTTDL) shows a compositional bias: polar residues. A compositionally biased stretch (basic and acidic residues) spans 1191–1201 (EEVRRDQLQGP).

Belongs to the ATG11 family. Homodimer and potential homooligomers.

It is found in the preautophagosomal structure membrane. Its function is as follows. Selective autophagy-specific protein required for pexophagy and mitophagy. In contrast to its Saccharomyces cerevisiae ATG11 ortholog, is not involved in non-selective autophagy nor in cytoplasm to vacuole transport (Cvt). The chain is Autophagy-related protein 11 from Aspergillus oryzae (strain ATCC 42149 / RIB 40) (Yellow koji mold).